A 565-amino-acid chain; its full sequence is Efflux pump aunC (565 aa).

Residues 1-14 (MSDTARISGGSFTS) are compositionally biased toward polar residues. The interval 1 to 57 (MSDTARISGGSFTSPPGRDVELNSFKEASQTRLYPYSSRKEEEGREDEQQRPEREED) is disordered. Residues 38–54 (SRKEEEGREDEQQRPER) are compositionally biased toward basic and acidic residues. 14 helical membrane-spanning segments follow: residues 59 to 79 (GALTGYKLVLVTVGLCFCIFC), 103 to 123 (DVGWYASAYLLTTCAVTLPFG), 128 to 148 (FFPIKWVYLSALFVFELGSFI), 164 to 184 (VAGLGGGGLFSGSLLIITQCV), 194 to 214 (GFIMSIFAVASVIAPLMGGAF), 222 to 242 (WCFYINLPFGLVSAVVIFFTF), 257 to 277 (AAGLDPLGTATFLPAIVCLLL), 293 to 313 (IIALFTLFGVLLACFVGLQLW), 335 to 355 (LYGFCLNGAMFTFVYYLPIWF), 378 to 398 (VIFAIISGVLVSATGYFGPFM), 399 to 419 (LLSAAMASIAAGLLSMLHPSS), 425 to 445 (IGYQVLLGSSIGMGFQLPVFV), 457 to 477 (TATALMTFIQLLGGAIFVSVA), and 530 to 550 (VHTFYLAIGLAAASFLAATVI).

This sequence belongs to the major facilitator superfamily. TCR/Tet family.

The protein resides in the cell membrane. Functionally, efflux pump; part of the gene cluster that mediates the biosynthesis of aurasperone B, a dimeric gamma-naphthopyrone. The polypeptide is Efflux pump aunC (Aspergillus niger (strain ATCC MYA-4892 / CBS 513.88 / FGSC A1513)).